We begin with the raw amino-acid sequence, 423 residues long: Gamma-glutamyl phosphate reductase (423 aa).

The protein belongs to the gamma-glutamyl phosphate reductase family.

Its subcellular location is the cytoplasm. The catalysed reaction is L-glutamate 5-semialdehyde + phosphate + NADP(+) = L-glutamyl 5-phosphate + NADPH + H(+). It functions in the pathway amino-acid biosynthesis; L-proline biosynthesis; L-glutamate 5-semialdehyde from L-glutamate: step 2/2. Catalyzes the NADPH-dependent reduction of L-glutamate 5-phosphate into L-glutamate 5-semialdehyde and phosphate. The product spontaneously undergoes cyclization to form 1-pyrroline-5-carboxylate. This chain is Gamma-glutamyl phosphate reductase, found in Pseudomonas entomophila (strain L48).